Here is a 611-residue protein sequence, read N- to C-terminus: UvrABC system protein C (611 aa).

The GIY-YIG domain maps to 19–97; it reads QRPGVYRMVD…IKELRPRYNV (79 aa). Positions 207–242 constitute a UVR domain; it reads NQVIEELGARMEAASERLEFEAAAQYRDRIQALQAV.

The protein belongs to the UvrC family. As to quaternary structure, interacts with UvrB in an incision complex.

Its subcellular location is the cytoplasm. In terms of biological role, the UvrABC repair system catalyzes the recognition and processing of DNA lesions. UvrC both incises the 5' and 3' sides of the lesion. The N-terminal half is responsible for the 3' incision and the C-terminal half is responsible for the 5' incision. In Alkalilimnicola ehrlichii (strain ATCC BAA-1101 / DSM 17681 / MLHE-1), this protein is UvrABC system protein C.